A 377-amino-acid polypeptide reads, in one-letter code: Acetyltransferase ple2 (377 aa).

Positions 1-27 (MKPFSPELLVLSFILLVLSCAIRPAKG) are cleaved as a signal peptide. A run of 4 helical transmembrane segments spans residues 29 to 49 (WILWVIIVALNTYLTMTTTGD), 56 to 76 (IANNLFVITLTATDYILLTDV), 176 to 196 (IAAWLLFTTNQVSILLTALSL), and 258 to 278 (PALYVQLYAAFFLSGVLHAIG).

Belongs to the wax synthase family.

Its subcellular location is the membrane. The protein operates within secondary metabolite biosynthesis; terpenoid biosynthesis. In terms of biological role, acetyltransferase; part of the gene cluster that mediates the biosynthesis of pleuromutilin, a tricyclic diterpene showing antibacterial properties. The geranylgeranyl diphosphate (GGPP) synthase ple4 catalyzes the first step in pleuromutilin biosynthesis. GGPP is then substrate of the premutilin synthase (PS) ple3 to yield premutilin. Premutilin synthase is a bifunctional enzyme composed of the fusion of a class II diterpene cyclase (DTC) and a class I diterpene synthase (DTS), with the corresponding domains and active sites containing characteristic aspartate-rich motifs. GGPP is first converted to mutildienyl-diphosphate (MPP) at the class II DTC site. MPP is subsequently further cyclized at the class I DTS site, followed by a 1,5-hydride shift and addition of water prior to terminating deprotonation, to yield premutilin. The cytochrome P450 monooxygenases ple5 and ple6 hydroxylate premutilin at C-11 and C-3, respectively, producing 11-hydroxypremutilin and 3-hydroxypremutilin. The combination of the actions of both ple5 and ple6 leads to the production of 3,11-dihydroxypremutilin. The short chain dehydrogenase ple7 further converts 3,11-dihydroxypremutilin into mutilin. The acetyltransferase ple2 then acetylates mutilin to produce 14-O-acetylmutilin. Finally, the cytochrome P450 monooxygenase ple1 catalyzes hydroxylation on the alpha position of the acetyl side chain of 14-O-acetylmutilin to yield pleuromutilin. The polypeptide is Acetyltransferase ple2 (Rhodocybe pseudopiperita (Clitopilus pseudopiperitus)).